Here is a 211-residue protein sequence, read N- to C-terminus: Protein-L-isoaspartate O-methyltransferase (211 aa).

Residue Ser62 is part of the active site.

It belongs to the methyltransferase superfamily. L-isoaspartyl/D-aspartyl protein methyltransferase family.

Its subcellular location is the cytoplasm. It carries out the reaction [protein]-L-isoaspartate + S-adenosyl-L-methionine = [protein]-L-isoaspartate alpha-methyl ester + S-adenosyl-L-homocysteine. Functionally, catalyzes the methyl esterification of L-isoaspartyl residues in peptides and proteins that result from spontaneous decomposition of normal L-aspartyl and L-asparaginyl residues. It plays a role in the repair and/or degradation of damaged proteins. This is Protein-L-isoaspartate O-methyltransferase from Shewanella sp. (strain ANA-3).